The sequence spans 342 residues: Protein BMEI1586 (342 aa).

The active-site Proton acceptor is the S90. Substrate is bound by residues 91–92 (GS), D251, and 256–257 (GT).

It belongs to the proline racemase family. In terms of assembly, homotetramer.

The catalysed reaction is trans-4-hydroxy-L-proline = cis-4-hydroxy-D-proline. Its function is as follows. In vitro, catalyzes the epimerization of trans-4-hydroxy-L-proline (t4LHyp) to cis-4-hydroxy-D-proline (c4DHyp) and that of trans-3-hydroxy-L-proline (t3LHyp) to cis-3-hydroxy-D-proline (c3DHyp), albeit with very low efficiency. The physiological substrate may be different. Displays neither proline racemase activity nor t3LHyp dehydratase activity. This Brucella melitensis biotype 1 (strain ATCC 23456 / CCUG 17765 / NCTC 10094 / 16M) protein is Protein BMEI1586.